A 79-amino-acid chain; its full sequence is ATP synthase subunit 9, mitochondrial (79 aa).

2 helical membrane passes run 21 to 41 (SGLIGAGAGVGIVFGCLILAF) and 59 to 79 (FALTEAIGLLALVMAFLILFI).

The protein belongs to the ATPase C chain family. As to quaternary structure, F-type ATPases have 2 components, CF(1) - the catalytic core - and CF(0) - the membrane proton channel. CF(1) has five subunits: alpha(3), beta(3), gamma(1), delta(1), epsilon(1). CF(0) has three main subunits: a, b and c.

It localises to the mitochondrion membrane. In terms of biological role, mitochondrial membrane ATP synthase (F(1)F(0) ATP synthase or Complex V) produces ATP from ADP in the presence of a proton gradient across the membrane which is generated by electron transport complexes of the respiratory chain. F-type ATPases consist of two structural domains, F(1) - containing the extramembraneous catalytic core and F(0) - containing the membrane proton channel, linked together by a central stalk and a peripheral stalk. During catalysis, ATP synthesis in the catalytic domain of F(1) is coupled via a rotary mechanism of the central stalk subunits to proton translocation. Part of the complex F(0) domain. A homomeric c-ring of probably 10 subunits is part of the complex rotary element. This chain is ATP synthase subunit 9, mitochondrial (ATP9), found in Acanthamoeba castellanii (Amoeba).